The following is a 166-amino-acid chain: Prorelaxin H1 (166 aa).

The first 5 residues, 1–5 (SRAVA), serve as a signal peptide directing secretion. Cystine bridges form between cysteine 16–cysteine 153, cysteine 28–cysteine 166, and cysteine 152–cysteine 157. A propeptide spans 37–139 (SLSQEDAPQT…KYLGLDTHSQ (103 aa)) (connecting peptide).

It belongs to the insulin family. As to quaternary structure, heterodimer of a B chain and an A chain linked by two disulfide bonds. In terms of tissue distribution, expressed in the corpus luteum of pregnancy but not in the placenta.

It localises to the secreted. In terms of biological role, relaxin is an ovarian hormone that acts with estrogen to produce dilatation of the birth canal in many mammals. May be involved in remodeling of connective tissues during pregnancy, promoting growth of pubic ligaments and ripening of the cervix. The polypeptide is Prorelaxin H1 (RNL1) (Pan troglodytes (Chimpanzee)).